A 540-amino-acid chain; its full sequence is Synaptotagmin-3 (540 aa).

Residues Gly9–Ile29 form a helical membrane-spanning segment. Positions Asp67–Leu249 constitute an SMP-LTD domain. The phospholipid binding stretch occupies residues Gln227 to Asp509. C2 domains lie at Trp240 to Leu363 and Arg401 to Tyr521. Ca(2+)-binding residues include Asp277, Asp283, Asp333, Asp335, and Asp341.

Belongs to the synaptotagmin family. It depends on Ca(2+) as a cofactor.

Its subcellular location is the membrane. Its function is as follows. May be involved in membrane trafficking. This chain is Synaptotagmin-3 (SYT3), found in Arabidopsis thaliana (Mouse-ear cress).